The following is a 388-amino-acid chain: GTPase Obg (388 aa).

In terms of domain architecture, Obg spans 1 to 159 (MKFVDEAVIK…RELRLELLLL (159 aa)). Positions 160–333 (ADVGMLGLPN…LCYKLADFME (174 aa)) constitute an OBG-type G domain. Residues 166 to 173 (GLPNAGKS), 191 to 195 (FTTLI), 213 to 216 (DIPG), 283 to 286 (NKVD), and 314 to 316 (SAV) each bind GTP. 2 residues coordinate Mg(2+): S173 and T193. The interval 359–380 (NQGEVITEDDDDWDDWDDEEDD) is disordered. Positions 364 to 380 (ITEDDDDWDDWDDEEDD) are enriched in acidic residues.

It belongs to the TRAFAC class OBG-HflX-like GTPase superfamily. OBG GTPase family. Monomer. The cofactor is Mg(2+).

The protein localises to the cytoplasm. Functionally, an essential GTPase which binds GTP, GDP and possibly (p)ppGpp with moderate affinity, with high nucleotide exchange rates and a fairly low GTP hydrolysis rate. Plays a role in control of the cell cycle, stress response, ribosome biogenesis and in those bacteria that undergo differentiation, in morphogenesis control. In Vibrio vulnificus (strain YJ016), this protein is GTPase Obg.